The primary structure comprises 403 residues: Basic leucine zipper 25 (403 aa).

2 disordered regions span residues 13–128 (SFWP…APVV) and 156–259 (VKPE…EFDT). Over residues 24–33 (PGSSSTPSPT) the composition is skewed to low complexity. A compositionally biased stretch (polar residues) spans 56 to 69 (LSGSDSSPTTNTIE). Composition is skewed to low complexity over residues 115–128 (APSSDPVDSSAPVV) and 161–174 (SSASASNQKQAQGS). Polar residues predominate over residues 175–195 (IVAQTSPGASSVRFSPTTSTQ). The segment covering 212–226 (DSDDDDLDGDADNGD) has biased composition (acidic residues). Serine 213 is subject to Phosphoserine. Residues 229–292 (DVKRARRMLS…DAAAVDNRIL (64 aa)) enclose the bZIP domain. The basic motif stretch occupies residues 231-250 (KRARRMLSNRESARRSRRRK). The Nuclear localization signal signature appears at 233–240 (ARRMLSNR). The interval 264 to 271 (LRAEHSTL) is leucine-zipper. Residues 332–345 (NTPSASSSIPPNSN) show a composition bias toward low complexity. Disordered regions lie at residues 332-361 (NTPSASSSIPPNSNHILKPANSSTNTSAGL) and 380-403 (EGMQNPFAPDSNLYETLPHWNHKH). The span at 351–361 (ANSSTNTSAGL) shows a compositional bias: polar residues.

Belongs to the bZIP family. As to quaternary structure, homodimer. Forms a heterodimer with BZIP1, BZIP1, BZIP2, BZIP9, BZIP11, BZIP44, BZIP53 and BZIP63. Interacts with ABI3 and forms a complex made of ABI3, BZIP53 and BZIP25. Expressed in roots, shoots, stems, leaves, stipulae, siliques, seeds, pollen, and flowers.

It localises to the nucleus. Its function is as follows. Transcription factor that binds to the 5'-ACGT-3' box, especially present in G-box-like motif (5'-CCACGTGGCC-3'), ABRE elements, of seed storage protein (SSP) encoding gene promoters (e.g. At2S and CRU3) and promotes their expression in seeds when in complex with ABI3 and BZIP53. This is Basic leucine zipper 25 (BZIP25) from Arabidopsis thaliana (Mouse-ear cress).